The primary structure comprises 352 residues: Ion-translocating oxidoreductase complex subunit D (352 aa).

Helical transmembrane passes span 20–40 (IMLL…WFFG), 42–62 (GTLF…AIVL), 69–91 (VASH…SIPP), and 123–143 (PAMI…TSWL). Threonine 187 is subject to FMN phosphoryl threonine. The next 5 helical transmembrane spans lie at 215-235 (LAGV…VFLL), 242-262 (WHIP…GWLF), 267-287 (LASP…FFIL), 301-321 (LIFG…GGYP), and 322-342 (DGVA…DYYT).

It belongs to the NqrB/RnfD family. The complex is composed of six subunits: RsxA, RsxB, RsxC, RsxD, RsxE and RsxG. It depends on FMN as a cofactor.

Its subcellular location is the cell inner membrane. Functionally, part of a membrane-bound complex that couples electron transfer with translocation of ions across the membrane. Required to maintain the reduced state of SoxR. The polypeptide is Ion-translocating oxidoreductase complex subunit D (Salmonella paratyphi A (strain ATCC 9150 / SARB42)).